We begin with the raw amino-acid sequence, 536 residues long: MAERDHYHTIDDPNVPCNFYDTVNLTGHTVFPNGSYDYYGTIVPAELVGTYDYIHSSLTERIEVREHVRGCVCKFKSCLNICCPWRQVFNSEVDGCIIDHSDNRTWPDPPMLNITFRNDSTILVNMFAQFAIQSFRPCPKMFSLQPETSHWDDYLLFENGSMLRVDDQQLIRKNEFCMVPTYVNESDMFYTIHPANCDMQDDNSTVKIINAYAMMFSIPFMMLTIAVYLLIPELRNQHGKSLVCYLVGLTVGYTSLCYVQLYQVDATGDACKVFGYTAYFFFMGAYMWLSVISFDLWHNFRGTRGINRFQEKKRFLFYSLYSWGIAVVFLAFTYIAQELTNLPAYLKPGIGDGVYCWLDMSNWAAMIYFYGPILVIVVANTIMFIMTAIKIHGVQREMARIIASENSTKNLRTEKDKFGLFLRLFLIMGITWLTELISYFVGSDKGWSKLFYISDLANAMQGFLIFMLFVMKKKVKHLITNRCSSVRDGSNQRQSQYSTKTTSSSVANLSLHEKPSVEKPLVISSSVDPQKTTIFR.

The Extracellular portion of the chain corresponds to 1–210; the sequence is MAERDHYHTI…DDNSTVKIIN (210 aa). 5 cysteine pairs are disulfide-bonded: C17–C71, C73–C78, C82–C177, C83–C96, and C138–C197. Residues N24 and N33 are each glycosylated (N-linked (GlcNAc...) asparagine). N-linked (GlcNAc...) asparagine glycans are attached at residues N103, N113, N118, N159, N184, and N203. Residues 211–231 traverse the membrane as a helical segment; sequence AYAMMFSIPFMMLTIAVYLLI. Over 232–241 the chain is Cytoplasmic; the sequence is PELRNQHGKS. A helical membrane pass occupies residues 242–262; that stretch reads LVCYLVGLTVGYTSLCYVQLY. The Extracellular segment spans residues 263–273; it reads QVDATGDACKV. The chain crosses the membrane as a helical span at residues 274–294; it reads FGYTAYFFFMGAYMWLSVISF. Residues 295 to 314 are Cytoplasmic-facing; sequence DLWHNFRGTRGINRFQEKKR. Residues 315 to 335 form a helical membrane-spanning segment; that stretch reads FLFYSLYSWGIAVVFLAFTYI. The Extracellular portion of the chain corresponds to 336 to 365; the sequence is AQELTNLPAYLKPGIGDGVYCWLDMSNWAA. The chain crosses the membrane as a helical span at residues 366–386; the sequence is MIYFYGPILVIVVANTIMFIM. Topologically, residues 387–417 are cytoplasmic; the sequence is TAIKIHGVQREMARIIASENSTKNLRTEKDK. Residues 418–438 form a helical membrane-spanning segment; the sequence is FGLFLRLFLIMGITWLTELIS. At 439-449 the chain is on the extracellular side; it reads YFVGSDKGWSK. The helical transmembrane segment at 450-470 threads the bilayer; sequence LFYISDLANAMQGFLIFMLFV. Topologically, residues 471–536 are cytoplasmic; the sequence is MKKKVKHLIT…VDPQKTTIFR (66 aa). A disordered region spans residues 487–506; it reads RDGSNQRQSQYSTKTTSSSV. The segment covering 492 to 505 has biased composition (low complexity); it reads QRQSQYSTKTTSSS.

This sequence belongs to the G-protein coupled receptor 2 family. Mth subfamily. Homodimer.

It is found in the cell membrane. Involved in biological aging and stress response. Essential for adult survival. The protein is G-protein coupled receptor Mth2 (mth2) of Drosophila yakuba (Fruit fly).